The following is a 549-amino-acid chain: Glucose-6-phosphate isomerase (549 aa).

Catalysis depends on Glu-355, which acts as the Proton donor. Catalysis depends on residues His-386 and Lys-514.

It belongs to the GPI family.

The protein resides in the cytoplasm. It catalyses the reaction alpha-D-glucose 6-phosphate = beta-D-fructose 6-phosphate. The protein operates within carbohydrate biosynthesis; gluconeogenesis. Its pathway is carbohydrate degradation; glycolysis; D-glyceraldehyde 3-phosphate and glycerone phosphate from D-glucose: step 2/4. In terms of biological role, catalyzes the reversible isomerization of glucose-6-phosphate to fructose-6-phosphate. The polypeptide is Glucose-6-phosphate isomerase (Cronobacter sakazakii (strain ATCC BAA-894) (Enterobacter sakazakii)).